A 747-amino-acid polypeptide reads, in one-letter code: Pyrin (747 aa).

Positions 1–92 (MANTRVDHLL…AEELHKATGP (92 aa)) constitute a Pyrin domain. Residues 89–181 (ATGPEHLTEE…GARSAAPLYR (93 aa)) are disordered. A compositionally biased stretch (acidic residues) spans 122-135 (PGEDEAQQNDDESD). The Zn(2+) site is built by cysteine 442, histidine 445, cysteine 465, and histidine 471. A B box-type zinc finger spans residues 442 to 479 (CPRHMKQVQLLFCEDHREPICLICRLSQEHQGHRVRPI). Positions 479–508 (IEEAALQYKEQIRKQLERLREMRGYVEEHK) form a coiled coil. The required for homotrimerization and induction of pyroptosomes stretch occupies residues 487–645 (KEQIRKQLER…RFSEMLGSEM (159 aa)). The tract at residues 698–720 (EPQDYLHPSSAQDTPELHEIHSQ) is disordered.

Homotrimer. Interacts (via the B box-type zinc finger) with PSTPIP1. Interacts (via the B30.2/SPRY domain) with several components of the inflammasome complex, including CASP1 p20 and p10 subunits, CASP5, PYCARD, NLRP1, NLRP2 and NLRP3, as well as with unprocessed IL1B; this interaction may lead to autophagic degradation of these proteins. Component of the AIM2 PANoptosome complex, a multiprotein complex that drives inflammatory cell death (PANoptosis). Interacts with NFKBIA and RELA. Interacts weakly with VASP and ACTR3. Interacts with active ULK1 (phosphorylated on 'Ser-317') and BECN1 simultaneously. Also interacts with ATG16L1 (via WD repeats), and with ATG8 family members, including GABARAP, GABARAPL1 and, to a lesser extent, GABARAPL2, MAP1LC3A/LC3A and MAP1LC3C/LC3C. Interacts with TRIM21. Interacts with YWHAB, YWHAE, YWHAG, YWHAH, YWHAQ and YWHAZ; the interaction is required for the down-regulation of pyrin pro-inflammatory activity. In terms of processing, degraded along with the delivery of its substrates to autolysosomal compartments (at protein level). Expressed in spleen and, to a lesser degree in the lung. Not expressed in thymus, testis, ovary, heart, brain, liver, kidney and muscle.

Its subcellular location is the cytoplasm. The protein resides in the cytoskeleton. The protein localises to the cell projection. It is found in the ruffle. It localises to the lamellipodium. Its subcellular location is the cytoplasmic vesicle. The protein resides in the autophagosome. The protein localises to the nucleus. In terms of biological role, involved in the regulation of innate immunity and the inflammatory response in response to IFNG/IFN-gamma. Organizes autophagic machinery by serving as a platform for the assembly of ULK1, Beclin 1/BECN1, ATG16L1, and ATG8 family members and recognizes specific autophagy targets, thus coordinating target recognition with assembly of the autophagic apparatus and initiation of autophagy. Acts as an autophagy receptor for the degradation of several inflammasome components, including CASP1, NLRP1 and NLRP3, hence preventing excessive IL1B- and IL18-mediated inflammation. However, it can also have a positive effect in the inflammatory pathway, acting as an innate immune sensor that triggers PYCARD/ASC specks formation, caspase-1 activation, and IL1B and IL18 production. Together with AIM2, also acts as a mediator of pyroptosis, necroptosis and apoptosis (PANoptosis), an integral part of host defense against pathogens, in response to bacterial infection. It is required for PSTPIP1-induced PYCARD/ASC oligomerization and inflammasome formation. Recruits PSTPIP1 to inflammasomes, and is required for PSTPIP1 oligomerization. This Rattus norvegicus (Rat) protein is Pyrin.